Here is a 900-residue protein sequence, read N- to C-terminus: Periodic tryptophan protein 2 (900 aa).

5 WD repeats span residues 10–47 (GAPY…SVTL), 50–89 (ETST…VLHR), 91–129 (TFKD…RAVL), 139–178 (NSDD…GVLN), and 185–229 (GHRD…VKMD). The disordered stretch occupies residues 228-284 (MDESEDGHSEPPSPVTPDRADEVMVENGGGVGTELKKRKEYDGKGLESDEEGDDDDE). A compositionally biased stretch (basic and acidic residues) spans 261-274 (ELKKRKEYDGKGLE). S275 carries the phosphoserine modification. Positions 275–284 (SDEEGDDDDE) are enriched in acidic residues. 8 WD repeats span residues 302–341 (QASA…CIHL), 344–384 (ISRQ…YILK), 387–426 (GHYF…CFIT), 429–468 (EHTN…NYKT), 472–512 (PTPR…IKDI), 515–554 (GHEA…GTVE), 557–596 (RHNH…LMYT), and 619–658 (SSGK…LLRR). The interval 684 to 720 (PIDLIDDDNSDEEGGIDKQSRGNLGYDLPGSRPNRGR) is disordered. The span at 687–697 (LIDDDNSDEEG) shows a compositional bias: acidic residues. The stretch at 720 to 759 (RPIIRTKSLSIAPTGRSFAAATTEGVLIFSIDDTFIFDPT) is one WD 14 repeat.

The protein belongs to the WD repeat PWP2 family. As to quaternary structure, component of the ribosomal small subunit (SSU) processome. Interacts with TBP1 in the nucleus. Expressed constitutively and ubiquitously; observed in seeds, seedlings, roots, leaves, stems, flowers and siliques.

Its subcellular location is the nucleus. It is found in the nucleolus. Functionally, involved in nucleolar processing of pre-18S ribosomal RNA. Plays a role early in ribosome biogenesis, especially in the maturation of 5.8S rRNA. Required for guard cell functions. The chain is Periodic tryptophan protein 2 from Arabidopsis thaliana (Mouse-ear cress).